Consider the following 173-residue polypeptide: Ribosome maturation factor RimM (173 aa).

In terms of domain architecture, PRC barrel spans 98–170 (VGDMTWDSFI…SLTVSLPEGL (73 aa)).

This sequence belongs to the RimM family. In terms of assembly, binds ribosomal protein uS19.

It is found in the cytoplasm. In terms of biological role, an accessory protein needed during the final step in the assembly of 30S ribosomal subunit, possibly for assembly of the head region. Essential for efficient processing of 16S rRNA. May be needed both before and after RbfA during the maturation of 16S rRNA. It has affinity for free ribosomal 30S subunits but not for 70S ribosomes. In Parabacteroides distasonis (strain ATCC 8503 / DSM 20701 / CIP 104284 / JCM 5825 / NCTC 11152), this protein is Ribosome maturation factor RimM.